The sequence spans 427 residues: MWMLAALLLLVPRSGKAATLEKPVLTLHPPWTTIFKGERVTLRCDGYHPLLLELRPISTLWYLGHVLLPSHKKSIEVQAPGVYRCQTRGAPVSDPIHLSVSNDWLILQVPYAAVFEGEPLVMRCRGWYDKVVYKLHYYHDGQAVRYFHSSTNYTVLQARASDSGHYQCSGTMRIPVESAPMFSSKVAVTVQELFQTPVLRTLSPQEARGRVVLRCETRLHPQKRDTPLQFAFYKYSRPVRRFDWGAEYTVPESEVEELESYWCEAATTSRSVRKRSPWLQLPGRGPVLDLASTTAPVAQAAALGPGDKPLSFRKTPVSRSVQSVTSIPNSTFAGLQFPAGHVATAGPHACAPLPASAEQSREALQPKVDLLLREMQLLKGLLSRVVLGLKDPQALHELTETPETPNSHVTVNPATPETTVMEGRVDS.

The first 17 residues, 1-17 (MWMLAALLLLVPRSGKA), serve as a signal peptide directing secretion. Ig-like C2-type domains are found at residues 23 to 101 (PVLT…LSVS) and 103 to 189 (DWLI…VAVT). 2 disulfide bridges follow: C44–C85 and C124–C168. A glycan (N-linked (GlcNAc...) asparagine) is linked at N152. Polar residues predominate over residues 401 to 418 (TPETPNSHVTVNPATPET). The tract at residues 401–427 (TPETPNSHVTVNPATPETTVMEGRVDS) is disordered.

Expressed at low levels. Expressed in B-lymphocytes. Detected in spleen, lymph node, kidney, lung and brain.

Its subcellular location is the cytoplasm. It localises to the endoplasmic reticulum. The protein is Fc receptor-like B (Fcrlb) of Mus musculus (Mouse).